Consider the following 175-residue polypeptide: ATP synthase subunit delta (175 aa).

The protein belongs to the ATPase delta chain family. As to quaternary structure, F-type ATPases have 2 components, F(1) - the catalytic core - and F(0) - the membrane proton channel. F(1) has five subunits: alpha(3), beta(3), gamma(1), delta(1), epsilon(1). F(0) has three main subunits: a(1), b(2) and c(10-14). The alpha and beta chains form an alternating ring which encloses part of the gamma chain. F(1) is attached to F(0) by a central stalk formed by the gamma and epsilon chains, while a peripheral stalk is formed by the delta and b chains.

The protein localises to the cell membrane. In terms of biological role, f(1)F(0) ATP synthase produces ATP from ADP in the presence of a proton or sodium gradient. F-type ATPases consist of two structural domains, F(1) containing the extramembraneous catalytic core and F(0) containing the membrane proton channel, linked together by a central stalk and a peripheral stalk. During catalysis, ATP synthesis in the catalytic domain of F(1) is coupled via a rotary mechanism of the central stalk subunits to proton translocation. Functionally, this protein is part of the stalk that links CF(0) to CF(1). It either transmits conformational changes from CF(0) to CF(1) or is implicated in proton conduction. In Lactococcus lactis subsp. cremoris (strain MG1363), this protein is ATP synthase subunit delta.